The sequence spans 304 residues: Meiotically up-regulated gene 86 protein (304 aa).

The span at 1-12 (MSSNPSRSNSRS) shows a compositional bias: low complexity. Positions 1–23 (MSSNPSRSNSRSKNGDLESGLKF) are disordered. 6 helical membrane passes run 93-113 (PAPF…LFNV), 123-143 (MVTA…SMWE), 150-170 (FGGA…SIFI), 188-208 (AIGL…LCTV), 212-232 (LAFF…ACAF), and 247-267 (VGGA…MAGL).

The protein belongs to the acetate uptake transporter (AceTr) (TC 2.A.96) family.

It is found in the endoplasmic reticulum membrane. The protein resides in the golgi apparatus. It localises to the golgi stack membrane. The protein localises to the vacuole membrane. In terms of biological role, has a role in meiosis. This Schizosaccharomyces pombe (strain 972 / ATCC 24843) (Fission yeast) protein is Meiotically up-regulated gene 86 protein (mug86).